A 311-amino-acid polypeptide reads, in one-letter code: MTKLIFMGTPDFSATVLKGLLTDDRYEILAVVTQPDRAVGRKKVIQETPVKQAAKEAGLSIYQPEKLSGSPEMEELMKLGADGIVTAAFGQFLPSKLLDSMDFAVNVHASLLPRHRGGAPIHYALIQGDEEAGVTIMEMVKEMDAGDMISRRSIPITDEDNVGTLFEKLALVGRDLLLDTLPAYIAGDIKPEPQDTSQVTFSPNIKPEEEKLDWNKTNRQLFNQIRGMNPWPVAHTFLKGDRFKIYEALPVEGQGNPGEILSIGKKELIVATAEGALSLKQVQPAGKPKMDIASFLNGVGRTLTVGERFGD.

A (6S)-5,6,7,8-tetrahydrofolate-binding site is contributed by 110–113 (SLLP).

It belongs to the Fmt family.

It catalyses the reaction L-methionyl-tRNA(fMet) + (6R)-10-formyltetrahydrofolate = N-formyl-L-methionyl-tRNA(fMet) + (6S)-5,6,7,8-tetrahydrofolate + H(+). Attaches a formyl group to the free amino group of methionyl-tRNA(fMet). The formyl group appears to play a dual role in the initiator identity of N-formylmethionyl-tRNA by promoting its recognition by IF2 and preventing the misappropriation of this tRNA by the elongation apparatus. The protein is Methionyl-tRNA formyltransferase of Streptococcus pneumoniae (strain P1031).